Consider the following 154-residue polypeptide: Nuclear cap-binding protein subunit 2 (154 aa).

MRNA is bound by residues tyrosine 10, tyrosine 33, 102–106 (RVDWD), 113–117 (RQYGR), and 123–124 (QV). In terms of domain architecture, RRM spans 30–108 (CTLYVGNLSF…RLIRVDWDAG (79 aa)).

This sequence belongs to the RRM NCBP2 family. In terms of assembly, component of the nuclear cap-binding complex (CBC), a heterodimer composed of Cbp80 and Cbp20 that interacts with m7GpppG-capped RNA. Interacts with Ars2.

It is found in the nucleus. Functionally, component of the cap-binding complex (CBC), which binds co-transcriptionally to the 5' cap of pre-mRNAs and is involved in various processes such as pre-mRNA splicing and RNA-mediated gene silencing (RNAi). The CBC complex is involved in miRNA-mediated RNA interference via its interaction with Ars2 and is required for primary microRNAs (miRNAs) processing. Also involved in innate immunity via the short interfering RNAs (siRNAs) processing machinery by restricting the viral RNA production. In the CBC complex, Cbp20 recognizes and binds capped RNAs (m7GpppG-capped RNA) but requires Cbp80 to stabilize the movement of its N-terminal loop and lock the CBC into a high affinity cap-binding state with the cap structure. This chain is Nuclear cap-binding protein subunit 2 (Cbp20), found in Drosophila yakuba (Fruit fly).